The sequence spans 149 residues: Secreted RxLR effector protein 17 (149 aa).

An N-terminal signal peptide occupies residues 1 to 24; that stretch reads MRLFYFSAMSVIGLLARNNMVVVA. The RxLR-dEER signature appears at 52–78; the sequence is RSLRTREKDIQDSTVAKDDAIKVEEDR.

The protein belongs to the RxLR effector family.

The protein resides in the secreted. The protein localises to the host cytoplasm. It localises to the host nucleus. In terms of biological role, effector that acts as a broad suppressor of cell death to interrupt plant immunity. Inhibits cell death induced by cell death-inducing proteins, including the PAMP elicitor INF1 from P.infestans. The protein is Secreted RxLR effector protein 17 of Plasmopara viticola (Downy mildew of grapevine).